Consider the following 347-residue polypeptide: Endo-1,4-beta-xylanase 3 (347 aa).

The signal sequence occupies residues 1 to 16 (MKANVILCLLAPLVAA). Residues 17 to 45 (LPTETIHLDPELAALRANLTERTADLWDR) constitute a propeptide that is removed on maturation. Glutamine 46 carries the pyrrolidone carboxylic acid modification. Residues 46–345 (QASQSIDQLI…KPAYNSIVGI (300 aa)) form the GH10 domain. Glutamate 176 functions as the Proton donor in the catalytic mechanism. Catalysis depends on glutamate 282, which acts as the Nucleophile. An intrachain disulfide couples cysteine 300 to cysteine 306.

This sequence belongs to the glycosyl hydrolase 10 (cellulase F) family. Monomer. Not glycosylated.

The protein resides in the secreted. It catalyses the reaction Endohydrolysis of (1-&gt;4)-beta-D-xylosidic linkages in xylans.. It functions in the pathway glycan degradation; xylan degradation. Functionally, glycoside hydrolase involved in the hydrolysis of xylan, a major plant cell wall hemicellulose made up of 1,4-beta-linked D-xylopyranose residues. Catalyzes the endohydrolysis of the main-chain 1,4-beta-glycosidic bonds connecting the xylose subunits yielding various xylooligosaccharides and xylose. Produces xylobiose and xylotriose as the main degradation products. The chain is Endo-1,4-beta-xylanase 3 (xyn3) from Hypocrea jecorina (strain QM6a) (Trichoderma reesei).